The sequence spans 392 residues: MPPKKQQEVVKVQWGRPGNNLKTGIVGMPNVGKSTFFRAITKSVLGNPANYPYATIDPEEAKVAVPDERFDWLCEAYKPKSRVPAFLTVFDIAGLTKGASTGVGLGNAFLSHVRAVDAIYQVVRAFDDAEIIHVEGDVDPIRDLSIIVDELLIKDAEFVEKHLEGLRKITSRGANTLEMKAKKEEQAIIEKVYQYLTETKQPIRKGDWSNREVEIINSLYLLTAKPVIYLVNMSERDFLRQKNKYLPKIKKWIDENSPGDTLIPMSVAFEERLTNFTEEEAIEECKKLNTKSMLPKIIVTGYNALNLINYFTCGEDEVRSWTIRKGTKAPQAAGVIHTDFEKAFVVGEIMHYQDLFDYKTENACRAAGKYLTKGKEYVMESGDIAHWKAGKR.

An OBG-type G domain is found at 21–285; that stretch reads LKTGIVGMPN…FTEEEAIEEC (265 aa). ATP is bound at residue 30 to 35; that stretch reads NVGKST. Mg(2+)-binding residues include Ser-34 and Thr-55. Residue Met-233 participates in ATP binding. The 84-residue stretch at 306–389 folds into the TGS domain; sequence NLINYFTCGE…ESGDIAHWKA (84 aa).

This sequence belongs to the TRAFAC class OBG-HflX-like GTPase superfamily. OBG GTPase family. YchF/OLA1 subfamily. In terms of assembly, monomer. Requires Mg(2+) as cofactor.

It localises to the cytoplasm. The protein resides in the nucleus. In terms of biological role, hydrolyzes ATP, and can also hydrolyze GTP with lower efficiency. Has lower affinity for GTP. Negatively regulates the G2/M transition in the cell cycle. The protein is Obg-like ATPase 1 of Schizosaccharomyces pombe (strain 972 / ATCC 24843) (Fission yeast).